Here is a 447-residue protein sequence, read N- to C-terminus: Enolase (447 aa).

Q168 contacts (2R)-2-phosphoglycerate. The Proton donor role is filled by E210. 3 residues coordinate Mg(2+): D247, E292, and D319. 4 residues coordinate (2R)-2-phosphoglycerate: K344, R373, S374, and K395. The active-site Proton acceptor is K344.

This sequence belongs to the enolase family. Component of the RNA degradosome, a multiprotein complex involved in RNA processing and mRNA degradation. Mg(2+) is required as a cofactor.

The protein resides in the cytoplasm. Its subcellular location is the secreted. It is found in the cell surface. The enzyme catalyses (2R)-2-phosphoglycerate = phosphoenolpyruvate + H2O. It functions in the pathway carbohydrate degradation; glycolysis; pyruvate from D-glyceraldehyde 3-phosphate: step 4/5. In terms of biological role, catalyzes the reversible conversion of 2-phosphoglycerate (2-PG) into phosphoenolpyruvate (PEP). It is essential for the degradation of carbohydrates via glycolysis. In Blochmanniella floridana, this protein is Enolase.